A 321-amino-acid chain; its full sequence is Small ribosomal subunit biogenesis GTPase RsgA (321 aa).

In terms of domain architecture, CP-type G spans 89–248; sequence QSWINRPPVA…VADTPGFNRP (160 aa). Residues 138-141 and 190-198 contribute to the GTP site; these read TKRD and GPSGVGKTS. The Zn(2+) site is built by cysteine 273, cysteine 278, histidine 280, and cysteine 286.

This sequence belongs to the TRAFAC class YlqF/YawG GTPase family. RsgA subfamily. As to quaternary structure, monomer. Associates with 30S ribosomal subunit, binds 16S rRNA. Zn(2+) serves as cofactor.

The protein localises to the cytoplasm. Its function is as follows. One of several proteins that assist in the late maturation steps of the functional core of the 30S ribosomal subunit. Helps release RbfA from mature subunits. May play a role in the assembly of ribosomal proteins into the subunit. Circularly permuted GTPase that catalyzes slow GTP hydrolysis, GTPase activity is stimulated by the 30S ribosomal subunit. The sequence is that of Small ribosomal subunit biogenesis GTPase RsgA from Prochlorococcus marinus (strain MIT 9303).